The following is a 1233-amino-acid chain: Structural maintenance of chromosomes protein 1A (1233 aa).

Glycine 32–serine 39 is an ATP binding site. Coiled coils occupy residues glutamate 104–leucine 124 and glutamate 163–isoleucine 503. Residues isoleucine 284 to glutamine 293 show a composition bias toward basic and acidic residues. Disordered regions lie at residues isoleucine 284–lysine 308 and glutamine 348–glutamate 369. Phosphoserine is present on residues serine 358 and serine 360. Residues valine 515–alanine 629 enclose the SMC hinge domain. Lysine 648 and lysine 713 each carry N6-acetyllysine. A coiled-coil region spans residues lysine 660 to methionine 935. A disordered region spans residues methionine 947–serine 966. Residues glutamate 953 to serine 966 show a composition bias toward low complexity. Serine 957 bears the Phosphoserine; by ATM mark. Serine 962 carries the post-translational modification Phosphoserine. Serine 966 bears the Phosphoserine; by ATM and ATR mark. The residue at position 970 (serine 970) is a Phosphoserine. A coiled-coil region spans residues lysine 991–aspartate 1068. Lysine 1037 is modified (N6-acetyllysine).

The protein belongs to the SMC family. SMC1 subfamily. As to quaternary structure, forms a heterodimer with SMC3 in cohesin complexes. Cohesin complexes are composed of the SMC1 (SMC1A or SMC1B) and SMC3 heterodimer attached via their SMC hinge domain, RAD21 which link them, and one STAG protein (STAG1, STAG2 or STAG3), which interacts with RAD21. In germ cell cohesin complexes, SMC1A is mutually exclusive with SMC1B. Interacts with BRCA1. Found in a complex with CDCA5, SMC3 and RAD21, PDS5A/SCC-112 and PDS5B/APRIN. Interacts with NDC80. Interacts with BRAT1. Found in a complex containing POLE and SMC3. Interacts with RPGR, STAG3 and SYCP2. The cohesin complex interacts with the cohesin loading complex subunits NIPBL/Scc2 (via HEAT repeats) and MAU2/Scc4. NIPBL directly contacts all members of the complex, RAD21, SMC1A/B, SMC3 and STAG1. Ubiquitinated by the DCX(DCAF15) complex, leading to its degradation. In terms of processing, phosphorylated by ATM upon ionizing radiation in a NBS1-dependent manner. Phosphorylated by ATR upon DNA methylation in a MSH2/MSH6-dependent manner. Phosphorylation of Ser-957 and Ser-966 activates it and is required for S-phase checkpoint activation.

The protein localises to the nucleus. It localises to the chromosome. Its subcellular location is the centromere. It is found in the kinetochore. Functionally, involved in chromosome cohesion during cell cycle and in DNA repair. Central component of cohesin complex. The cohesin complex is required for the cohesion of sister chromatids after DNA replication. The cohesin complex apparently forms a large proteinaceous ring within which sister chromatids can be trapped. At anaphase, the complex is cleaved and dissociates from chromatin, allowing sister chromatids to segregate. The cohesin complex may also play a role in spindle pole assembly during mitosis. Involved in DNA repair via its interaction with BRCA1 and its related phosphorylation by ATM, or via its phosphorylation by ATR. Works as a downstream effector both in the ATM/NBS1 branch and in the ATR/MSH2 branch of S-phase checkpoint. This is Structural maintenance of chromosomes protein 1A (SMC1A) from Homo sapiens (Human).